The following is a 246-amino-acid chain: Ribosomal RNA small subunit methyltransferase J (246 aa).

S-adenosyl-L-methionine is bound by residues 115 to 116 and Asp169; that span reads ER.

It belongs to the methyltransferase superfamily. RsmJ family.

The protein localises to the cytoplasm. It carries out the reaction guanosine(1516) in 16S rRNA + S-adenosyl-L-methionine = N(2)-methylguanosine(1516) in 16S rRNA + S-adenosyl-L-homocysteine + H(+). In terms of biological role, specifically methylates the guanosine in position 1516 of 16S rRNA. The protein is Ribosomal RNA small subunit methyltransferase J of Buchnera aphidicola subsp. Acyrthosiphon pisum (strain APS) (Acyrthosiphon pisum symbiotic bacterium).